A 363-amino-acid polypeptide reads, in one-letter code: Flagellar P-ring protein (363 aa).

An N-terminal signal peptide occupies residues Met-1 to Ala-18.

It belongs to the FlgI family. As to quaternary structure, the basal body constitutes a major portion of the flagellar organelle and consists of four rings (L,P,S, and M) mounted on a central rod.

The protein localises to the periplasm. The protein resides in the bacterial flagellum basal body. Functionally, assembles around the rod to form the L-ring and probably protects the motor/basal body from shearing forces during rotation. The polypeptide is Flagellar P-ring protein (Sulfurihydrogenibium sp. (strain YO3AOP1)).